Consider the following 194-residue polypeptide: Probable RNA polymerase sigma factor HI_1459 (194 aa).

The Polymerase core binding motif lies at 45 to 58 (DLVQEAFLSAFKNL). The H-T-H motif DNA-binding region spans 161–180 (SEEICQETHLTSSNLHTTLY).

Belongs to the sigma-70 factor family. ECF subfamily.

The chain is Probable RNA polymerase sigma factor HI_1459 from Haemophilus influenzae (strain ATCC 51907 / DSM 11121 / KW20 / Rd).